A 450-amino-acid chain; its full sequence is MKATKTTYKKDPMGLTPSQIVNELNRFIVGQEKAKKAVAIALRNRCRRKRVEGNLRNEIVPKNILMIGSTGVGKTEIARRLAKLTNSPFYKIEATKFTEVGYVGRDVESIIRDLVEIAVNTEKTLAKTKVDIHAREKAIERILDSLVGKTSSSETREKFKEKILNGELDDKEIEISVADTTPVGGGSFEIPGMPGASMGVLNLGDMIGRALGSSKTKTKKMLVKDAMAIIIPEESEKLIDQEKIIQQAINLAENDGIVFIDEIDKIASTGSSGAKNAAISREGVQRDLLPLIEGTTVNTKYGPVKTDHILFIASGAFHIAKPSDLLPELQGRLPIRVELNSLTKDDMIKILLEPETSLIKQYSALIGTEDVRLEFAASAIEKIADYAITVNLEVEDIGARRLHTILENLLEDISFEASEMKGKKITIDDKFVENQLSKIITNLDLAKFVL.

Residues V29, 71–76 (GVGKTE), D261, E328, and R400 contribute to the ATP site.

The protein belongs to the ClpX chaperone family. HslU subfamily. In terms of assembly, a double ring-shaped homohexamer of HslV is capped on each side by a ring-shaped HslU homohexamer. The assembly of the HslU/HslV complex is dependent on binding of ATP.

It is found in the cytoplasm. Its function is as follows. ATPase subunit of a proteasome-like degradation complex; this subunit has chaperone activity. The binding of ATP and its subsequent hydrolysis by HslU are essential for unfolding of protein substrates subsequently hydrolyzed by HslV. HslU recognizes the N-terminal part of its protein substrates and unfolds these before they are guided to HslV for hydrolysis. In Rickettsia africae (strain ESF-5), this protein is ATP-dependent protease ATPase subunit HslU.